The chain runs to 109 residues: Mitochondrial pyruvate carrier 1 (109 aa).

Alanine 2 is subject to N-acetylalanine. At 2–20 (AGALVRKAADYVRSKDFRD) the chain is on the mitochondrial matrix side. A helical membrane pass occupies residues 21 to 41 (YLMSTHFWGPVANWGLPIAAI). Topologically, residues 42-52 (NDMKKSPEIIS) are mitochondrial intermembrane. A helical transmembrane segment spans residues 53–71 (GRMTFALCCYSLTFMRFAY). Lysine 72 carries the post-translational modification N6-acetyllysine. Residues 72–109 (KVQPRNWLLFACHVTNEVAQLIQGGRLINYEMSKRPSA) lie on the Mitochondrial matrix side of the membrane.

Belongs to the mitochondrial pyruvate carrier (MPC) (TC 2.A.105) family. In terms of assembly, homodimer. Forms heterodimer with MPC2. The heterodimer is the more stable and dominant form.

The protein localises to the mitochondrion inner membrane. The catalysed reaction is pyruvate(out) + H(+)(out) = pyruvate(in) + H(+)(in). Its function is as follows. Mediates the uptake of pyruvate into mitochondria. The protein is Mitochondrial pyruvate carrier 1 (Mpc1) of Mus musculus (Mouse).